A 502-amino-acid polypeptide reads, in one-letter code: Sulfate adenylyltransferase (502 aa).

The N-terminal stretch occupies residues 1–167 (MPSPHGGVLQ…LEAIQLPVHY (167 aa)). Residues 168–393 (DYPGWRKTPA…LRESNPSRPK (226 aa)) form a catalytic region. Sulfate is bound at residue Gln-195. ATP-binding positions include 195-198 (QTRN) and 289-292 (GRDH). Catalysis depends on residues Thr-196, Arg-197, and Asn-198. Residue Arg-197 coordinates sulfate. Ala-293 serves as a coordination point for sulfate. Residue Val-331 participates in ATP binding. The interval 394–502 (QGFALVLSET…FLEDQGFFQF (109 aa)) is required for oligomerization; adenylyl-sulfate kinase-like.

The protein belongs to the sulfate adenylyltransferase family. In terms of assembly, homohexamer. Dimer of trimers.

The protein resides in the cytoplasm. The catalysed reaction is sulfate + ATP + H(+) = adenosine 5'-phosphosulfate + diphosphate. Its pathway is sulfur metabolism; hydrogen sulfide biosynthesis; sulfite from sulfate: step 1/3. In terms of biological role, catalyzes the first intracellular reaction of sulfate assimilation, forming adenosine-5'-phosphosulfate (APS) from inorganic sulfate and ATP. Plays an important role in sulfate activation as a component of the biosynthesis pathway of sulfur-containing amino acids. The sequence is that of Sulfate adenylyltransferase from Kluyveromyces lactis (strain ATCC 8585 / CBS 2359 / DSM 70799 / NBRC 1267 / NRRL Y-1140 / WM37) (Yeast).